We begin with the raw amino-acid sequence, 132 residues long: Small ribosomal subunit protein eS12 (132 aa).

It belongs to the eukaryotic ribosomal protein eS12 family.

It localises to the cytoplasm. This chain is Small ribosomal subunit protein eS12 (rps12), found in Xenopus laevis (African clawed frog).